Reading from the N-terminus, the 218-residue chain is Putative tRNA methyltransferase MG248 (218 aa).

Belongs to the TrmK family.

It is found in the cytoplasm. The polypeptide is Putative tRNA methyltransferase MG248 (Mycoplasma genitalium (strain ATCC 33530 / DSM 19775 / NCTC 10195 / G37) (Mycoplasmoides genitalium)).